A 302-amino-acid polypeptide reads, in one-letter code: MSNTFQDLIMLLQNYWAQQGCTIIQPIDIAVGAGTSHPMTCLLALGPEPIATAYVQPSRRPTDGRYGNNPNRLQHYYQFQVILKPSPHNIQEIYLDSLKQIGLDPTLNDIRFVEDNWENQTLGAWGLGWEVWLNGMEVTQFTYFQQVGGLECQIVAGEITYGLERIAMHLQNVENVFDLRWNKGAFGYITYGDIFLQNEVEQSTYNFEYADANLLLNCFDFYEKEAQKLLALDKPLPLPAYECVLKAVHNFNMLEARKAISVIERQCYILRLRTLTKAVAQAYYISRQSLGFPMCKRHKKRR.

It belongs to the class-II aminoacyl-tRNA synthetase family. As to quaternary structure, tetramer of two alpha and two beta subunits.

It is found in the cytoplasm. The catalysed reaction is tRNA(Gly) + glycine + ATP = glycyl-tRNA(Gly) + AMP + diphosphate. This chain is Glycine--tRNA ligase alpha subunit, found in Baumannia cicadellinicola subsp. Homalodisca coagulata.